Reading from the N-terminus, the 163-residue chain is Small heat shock protein C4 (163 aa).

In terms of domain architecture, sHSP spans 53–163 (YNNKILSPRT…QSKAKKIKIS (111 aa)).

It belongs to the small heat shock protein (HSP20) family.

This is Small heat shock protein C4 (hspc4-1) from Rickettsia felis (strain ATCC VR-1525 / URRWXCal2) (Rickettsia azadi).